We begin with the raw amino-acid sequence, 1759 residues long: Histone-lysine N-methyltransferase ASHH2 (1759 aa).

3 stretches are compositionally biased toward basic and acidic residues: residues 154 to 165 (QEKEAPQAKEDE), 197 to 206 (ETTKHIKPDE), and 215 to 224 (RFDDGGKEGR). Disordered stretches follow at residues 154–181 (QEKE…GIDT), 197–237 (ETTK…GSSD), 437–482 (CEAG…IESI), 515–556 (SNNI…NRNI), and 738–816 (DELR…VGRI). Over residues 462-472 (SARHLRKSSRK) the composition is skewed to basic residues. Over residues 530 to 556 (RSQGNLNNGEHNRSSHNGNVEGSNRNI) the composition is skewed to polar residues. Residues 758–775 (KKAKHPKSKSNGTKKGKS) are compositionally biased toward basic residues. Basic and acidic residues-rich tracts occupy residues 776-797 (KFSE…EQRK) and 804-816 (GRDD…VGRI). A CW-type zinc finger spans residues 859-912 (YSTESAWVRCDDCFKWRRIPASVVGSIDESSRWICMNNSDKRFADCSKSQEMSN). Residues Cys-868, Cys-871, Cys-893, and Cys-904 each coordinate Zn(2+). An AWS domain is found at 974–1024 (DEIMVCHCKPSPDGRLGCGEECLNRMLNIECLQGTCPAGDLCSNQQFQKRK). Positions 1026 to 1143 (VKFERFQSGK…KGQELTFDYN (118 aa)) constitute an SET domain. Tyr-1142 serves as a coordination point for S-adenosyl-L-methionine. The Post-SET domain maps to 1151–1167 (AAKKCYCGSSHCRGYIG). Disordered regions lie at residues 1225–1253 (GYKD…PPPL), 1271–1345 (AVQQ…PGVN), 1496–1606 (ERSE…FSSP), and 1727–1759 (KQSV…KLNS). The span at 1232–1241 (DNTQTQSSVS) shows a compositional bias: polar residues. Positions 1284–1293 (STSPTSSSLS) are enriched in low complexity. Residues 1304 to 1316 (KTTKHGSGEDKKI) show a composition bias toward basic and acidic residues. Over residues 1317–1326 (LPRPRPRMKT) the composition is skewed to basic residues. The segment covering 1511-1521 (ASQEPRYDHQS) has biased composition (basic and acidic residues). The span at 1530–1556 (SVTSSKAATPETASVSEGYSEPNSGLP) shows a compositional bias: polar residues. The segment covering 1566 to 1577 (RWDQPSKTKEQR) has biased composition (basic and acidic residues). The segment covering 1581–1594 (ILSQQTDETNGNQD) has biased composition (polar residues).

It belongs to the class V-like SAM-binding methyltransferase superfamily. Histone-lysine methyltransferase family. SET2 subfamily. Interacts with FRI and SUF4, two components of the transcription activator complex FRI-C, and with SWC6, a component of the SWR1 chromatin-remodeling complex. Interacts with BZR2/BES1 and IWS1. Ubiquitous, with higher levels in young tissues, including shoot and root apex. Expressed in ovules, tapetum layer and microspores.

It is found in the nucleus. It localises to the chromosome. The protein localises to the centromere. It catalyses the reaction N(6)-methyl-L-lysyl(36)-[histone H3] + S-adenosyl-L-methionine = N(6),N(6)-dimethyl-L-lysyl(36)-[histone H3] + S-adenosyl-L-homocysteine + H(+). The catalysed reaction is N(6),N(6)-dimethyl-L-lysyl(36)-[histone H3] + S-adenosyl-L-methionine = N(6),N(6),N(6)-trimethyl-L-lysyl(36)-[histone H3] + S-adenosyl-L-homocysteine + H(+). Functionally, histone methyltransferase involved in di and tri-methylation of 'Lys-36' of histone H3 (H3K36me2 and H3K36me3). Binds to H3 already mono- or di-methylated on 'Lys-4'(H3K4me1 or H3K4me2), but not to H3K4me3. H3K4me and H3K36me represent specific tags for epigenetic transcriptional activation. Positively regulates FLC transcription to prevent early flowering transition. Required for flowering transition in response to vernalization and for the maintenance of FLC expression in late embryos, but dispensable for the initial reactivation in early embryos during reprogramming. Also seems to modulate several traits including floral organ size, root size and dormancy. Promotes apical dominance. Directly involved in the tri-methylation of 'Lys-36' of histone H3 (H3K36me3) at LAZ5 chromatin to maintain a transcriptionally active state of LAZ5, a TIR-NB-LRR protein involved in innate immunity. Required for brassinosteroid (BR)-induced gene expression and histone H3 trimethylation on 'Lys-36' (H3K36me3) in BR-regulated genes. The polypeptide is Histone-lysine N-methyltransferase ASHH2 (Arabidopsis thaliana (Mouse-ear cress)).